Here is a 188-residue protein sequence, read N- to C-terminus: Elongation factor P (188 aa).

Position 34 is an N6-(3,6-diaminohexanoyl)-5-hydroxylysine (Lys34).

The protein belongs to the elongation factor P family. May be beta-lysylated on the epsilon-amino group of Lys-34 by the combined action of EpmA and EpmB, and then hydroxylated on the C5 position of the same residue by EpmC (if this protein is present). Lysylation is critical for the stimulatory effect of EF-P on peptide-bond formation. The lysylation moiety may extend toward the peptidyltransferase center and stabilize the terminal 3-CCA end of the tRNA. Hydroxylation of the C5 position on Lys-34 may allow additional potential stabilizing hydrogen-bond interactions with the P-tRNA.

The protein localises to the cytoplasm. It functions in the pathway protein biosynthesis; polypeptide chain elongation. In terms of biological role, involved in peptide bond synthesis. Alleviates ribosome stalling that occurs when 3 or more consecutive Pro residues or the sequence PPG is present in a protein, possibly by augmenting the peptidyl transferase activity of the ribosome. Modification of Lys-34 is required for alleviation. The protein is Elongation factor P of Photobacterium profundum (strain SS9).